Reading from the N-terminus, the 456-residue chain is Histidine--tRNA ligase (456 aa).

It belongs to the class-II aminoacyl-tRNA synthetase family. As to quaternary structure, homodimer.

The protein resides in the cytoplasm. It catalyses the reaction tRNA(His) + L-histidine + ATP = L-histidyl-tRNA(His) + AMP + diphosphate + H(+). The polypeptide is Histidine--tRNA ligase (Borreliella afzelii (strain PKo) (Borrelia afzelii)).